The chain runs to 64 residues: MAVQKSRVTPSRRGQRRSHDALAAKKLSIDPTSGEVHIRHHVTADGYYRGKKVIAIKASVVEED.

Residues 1 to 23 (MAVQKSRVTPSRRGQRRSHDALA) are disordered.

Belongs to the bacterial ribosomal protein bL32 family.

The chain is Large ribosomal subunit protein bL32 from Xylella fastidiosa (strain M23).